The following is a 196-amino-acid chain: Molybdenum cofactor guanylyltransferase (196 aa).

GTP contacts are provided by residues 12 to 14, Lys-25, Asn-53, Asp-71, and Asp-101; that span reads LAG. Asp-101 provides a ligand contact to Mg(2+).

It belongs to the MobA family. As to quaternary structure, monomer. Requires Mg(2+) as cofactor.

It is found in the cytoplasm. The catalysed reaction is Mo-molybdopterin + GTP + H(+) = Mo-molybdopterin guanine dinucleotide + diphosphate. In terms of biological role, transfers a GMP moiety from GTP to Mo-molybdopterin (Mo-MPT) cofactor (Moco or molybdenum cofactor) to form Mo-molybdopterin guanine dinucleotide (Mo-MGD) cofactor. The sequence is that of Molybdenum cofactor guanylyltransferase from Bordetella petrii (strain ATCC BAA-461 / DSM 12804 / CCUG 43448).